We begin with the raw amino-acid sequence, 138 residues long: Oleosin G (138 aa).

Helical transmembrane passes span 14 to 34, 48 to 68, and 69 to 89; these read ILGFITLFVSGAVLLFLTGLT, VLIFFSPILIPLATVLFVAVA, and GFLSAGGFGLAALSAISWLYN. The Proline-knot signature appears at 47-58; that stretch reads PVLIFFSPILIP.

Belongs to the oleosin family. In terms of tissue distribution, expressed in megagametophytes (at protein level).

The protein localises to the lipid droplet. Its subcellular location is the membrane. The protein is Oleosin G of Pinus massoniana (Chinese red pine).